A 57-amino-acid chain; its full sequence is UPF0391 membrane protein HNE_2348 (57 aa).

The next 2 helical transmembrane spans lie at 4 to 24 and 27 to 47; these read WALT…GGIA and AASI…ITFV.

Belongs to the UPF0391 family.

The protein localises to the cell membrane. This is UPF0391 membrane protein HNE_2348 from Hyphomonas neptunium (strain ATCC 15444).